Here is a 342-residue protein sequence, read N- to C-terminus: Terpene cyclase resF (342 aa).

Helical transmembrane passes span 5-25 (VSVV…GVFA), 81-101 (FMAQ…TEDF), 115-135 (WGVF…GVCF), 151-171 (STWI…MLIF), and 182-202 (IWGV…ASLL). Asparagine 224 is a glycosylation site (N-linked (GlcNAc...) asparagine). The next 3 membrane-spanning stretches (helical) occupy residues 229–249 (YVVA…FHLG), 269–289 (FLQI…WHEL), and 305–325 (YLLL…AWAL).

This sequence belongs to the membrane-bound ascI terpene cyclase family.

It localises to the membrane. It participates in antifungal biosynthesis. In terms of biological role, cyclase; part of the gene cluster that mediates the biosynthesis of the tetrahydropyranyl antifungal agent restricticin that acts as an inhibitor of CYP51 and blocks the ergosterol biosynthesis. The highly reducing polyketide synthase resH, the short chain dehydrogenase resG, the cyclase resF, the FAD-dependent monooxygenase resA and the enoylreductase resD are required to generate the first stable intermediate desmethylrestrictinol. ResH with resD biosynthesize the first polyketide chain intermediate that is reduced by resG, followed by epoxidation by resA before 6-endo cyclization via epoxide opening by resF leads to desmethylrestrictinol. The methyltransferase resE then catalyzes the C4 O-methylation of desmethylrestrictinol to produce restrictinol, and the nonribosomal peptide synthetase resC catalyzes the C3 esterification of restrictinol with glycine that leads to restricticin. The polypeptide is Terpene cyclase resF (Aspergillus sclerotiorum).